A 60-amino-acid polypeptide reads, in one-letter code: Large ribosomal subunit protein uL30 (60 aa).

It belongs to the universal ribosomal protein uL30 family. Part of the 50S ribosomal subunit.

The sequence is that of Large ribosomal subunit protein uL30 from Dehalococcoides mccartyi (strain CBDB1).